Consider the following 87-residue polypeptide: Small ribosomal subunit protein uS19 (87 aa).

This sequence belongs to the universal ribosomal protein uS19 family.

In terms of biological role, protein S19 forms a complex with S13 that binds strongly to the 16S ribosomal RNA. This Mesoplasma florum (strain ATCC 33453 / NBRC 100688 / NCTC 11704 / L1) (Acholeplasma florum) protein is Small ribosomal subunit protein uS19.